A 158-amino-acid polypeptide reads, in one-letter code: SsrA-binding protein (158 aa).

The protein belongs to the SmpB family.

The protein resides in the cytoplasm. In terms of biological role, required for rescue of stalled ribosomes mediated by trans-translation. Binds to transfer-messenger RNA (tmRNA), required for stable association of tmRNA with ribosomes. tmRNA and SmpB together mimic tRNA shape, replacing the anticodon stem-loop with SmpB. tmRNA is encoded by the ssrA gene; the 2 termini fold to resemble tRNA(Ala) and it encodes a 'tag peptide', a short internal open reading frame. During trans-translation Ala-aminoacylated tmRNA acts like a tRNA, entering the A-site of stalled ribosomes, displacing the stalled mRNA. The ribosome then switches to translate the ORF on the tmRNA; the nascent peptide is terminated with the 'tag peptide' encoded by the tmRNA and targeted for degradation. The ribosome is freed to recommence translation, which seems to be the essential function of trans-translation. The protein is SsrA-binding protein of Bartonella tribocorum (strain CIP 105476 / IBS 506).